Reading from the N-terminus, the 66-residue chain is Large ribosomal subunit protein bL33c (66 aa).

This sequence belongs to the bacterial ribosomal protein bL33 family.

It localises to the plastid. The protein localises to the chloroplast. This chain is Large ribosomal subunit protein bL33c, found in Ipomoea purpurea (Common morning glory).